Reading from the N-terminus, the 536-residue chain is ATP synthase subunit alpha, mitochondrial (536 aa).

Residues methionine 1 to tyrosine 27 constitute a mitochondrion transit peptide. Glycine 197–threonine 204 lines the ATP pocket.

This sequence belongs to the ATPase alpha/beta chains family. F-type ATPases have 2 components, CF(1) - the catalytic core - and CF(0) - the membrane proton channel. CF(1) has five subunits: alpha(3), beta(3), gamma(1), delta(1), epsilon(1). CF(0) has three main subunits: a, b and c.

The protein resides in the mitochondrion. Its subcellular location is the mitochondrion inner membrane. Mitochondrial membrane ATP synthase (F(1)F(0) ATP synthase or Complex V) produces ATP from ADP in the presence of a proton gradient across the membrane which is generated by electron transport complexes of the respiratory chain. F-type ATPases consist of two structural domains, F(1) - containing the extramembraneous catalytic core, and F(0) - containing the membrane proton channel, linked together by a central stalk and a peripheral stalk. During catalysis, ATP synthesis in the catalytic domain of F(1) is coupled via a rotary mechanism of the central stalk subunits to proton translocation. Subunits alpha and beta form the catalytic core in F(1). Rotation of the central stalk against the surrounding alpha(3)beta(3) subunits leads to hydrolysis of ATP in three separate catalytic sites on the beta subunits. Subunit alpha does not bear the catalytic high-affinity ATP-binding sites. The chain is ATP synthase subunit alpha, mitochondrial (atp1) from Schizosaccharomyces pombe (strain 972 / ATCC 24843) (Fission yeast).